The following is a 931-amino-acid chain: Phosphoenolpyruvate carboxylase (931 aa).

Residues histidine 158 and lysine 593 contribute to the active site.

The protein belongs to the PEPCase type 1 family. Requires Mg(2+) as cofactor.

The catalysed reaction is oxaloacetate + phosphate = phosphoenolpyruvate + hydrogencarbonate. Functionally, forms oxaloacetate, a four-carbon dicarboxylic acid source for the tricarboxylic acid cycle. The chain is Phosphoenolpyruvate carboxylase from Azorhizobium caulinodans (strain ATCC 43989 / DSM 5975 / JCM 20966 / LMG 6465 / NBRC 14845 / NCIMB 13405 / ORS 571).